The sequence spans 256 residues: Pyridoxine 5'-phosphate synthase (256 aa).

Asn8 and Arg19 together coordinate 3-amino-2-oxopropyl phosphate. Catalysis depends on His44, which acts as the Proton acceptor. Residues Arg46 and His51 each coordinate 1-deoxy-D-xylulose 5-phosphate. The Proton acceptor role is filled by Glu74. Position 111 (Thr111) interacts with 1-deoxy-D-xylulose 5-phosphate. The active-site Proton donor is His202. 3-amino-2-oxopropyl phosphate-binding positions include Asp203 and 225–226 (GH).

This sequence belongs to the PNP synthase family. As to quaternary structure, homooctamer; tetramer of dimers.

The protein localises to the cytoplasm. It catalyses the reaction 3-amino-2-oxopropyl phosphate + 1-deoxy-D-xylulose 5-phosphate = pyridoxine 5'-phosphate + phosphate + 2 H2O + H(+). It functions in the pathway cofactor biosynthesis; pyridoxine 5'-phosphate biosynthesis; pyridoxine 5'-phosphate from D-erythrose 4-phosphate: step 5/5. Catalyzes the complicated ring closure reaction between the two acyclic compounds 1-deoxy-D-xylulose-5-phosphate (DXP) and 3-amino-2-oxopropyl phosphate (1-amino-acetone-3-phosphate or AAP) to form pyridoxine 5'-phosphate (PNP) and inorganic phosphate. This is Pyridoxine 5'-phosphate synthase from Xanthomonas campestris pv. campestris (strain 8004).